The sequence spans 157 residues: Transcriptional repressor NrdR (157 aa).

Positions 1-21 (MRCPYCSSEDSQVKDSRPAED) are disordered. The segment at 3-34 (CPYCSSEDSQVKDSRPAEDGNAIRRRRICPDC) is a zinc-finger region. Over residues 11–21 (SQVKDSRPAED) the composition is skewed to basic and acidic residues. The ATP-cone domain occupies 49–139 (LMIIKKTGRK…VYRDFSHAED (91 aa)).

The protein belongs to the NrdR family. It depends on Zn(2+) as a cofactor.

Negatively regulates transcription of bacterial ribonucleotide reductase nrd genes and operons by binding to NrdR-boxes. The sequence is that of Transcriptional repressor NrdR from Sinorhizobium fredii (strain NBRC 101917 / NGR234).